We begin with the raw amino-acid sequence, 210 residues long: Putative cutinase (210 aa).

The span at 26–38 (DSERLPLKRDEPG) shows a compositional bias: basic and acidic residues. Positions 26-58 (DSERLPLKRDEPGSRSMRSTFIPSSQCSNLSSA) are disordered. Low complexity predominate over residues 49 to 58 (SSQCSNLSSA).

It catalyses the reaction cutin + H2O = cutin monomers.. The protein is Putative cutinase of Phytophthora capsici.